We begin with the raw amino-acid sequence, 342 residues long: MSERDSFLHLARPLGPAPVGAQPSTAPLNVAIQPQAVFSILDHSLRRPADQERVIGTLLGTRSEDGTEIEIRNCYAVPHTETAEQVEVDMDYQKQMLALHLRANPREVLVGWYATSSDLNTFSALIQNFYSQQGDGTWPHPAVHLTVSTVPGQDIESRTYISAPIGVTAERAADSCLFIPVPHEIKYGEAEKSGLELISSAKDREDRSQEIMTDLDSLERAVQHVLDMLERVSNYVNNVLDEEAEPSSALGQFLMNALSLAPKVDPADIERDFNNHIQDVLVVSYLANTIRTQIDLSNRLATAALTMGGTDALAGDGQKDGGDRKQGGDRRNKGRQQRTQEA.

The 137-residue stretch at 30–166 folds into the MPN domain; sequence VAIQPQAVFS…SRTYISAPIG (137 aa). The interval 310–342 is disordered; it reads TDALAGDGQKDGGDRKQGGDRRNKGRQQRTQEA. Over residues 317–331 the composition is skewed to basic and acidic residues; that stretch reads GQKDGGDRKQGGDRR.

It belongs to the eIF-3 subunit F family. In terms of assembly, component of the eukaryotic translation initiation factor 3 (eIF-3) complex.

It is found in the cytoplasm. Component of the eukaryotic translation initiation factor 3 (eIF-3) complex, which is involved in protein synthesis of a specialized repertoire of mRNAs and, together with other initiation factors, stimulates binding of mRNA and methionyl-tRNAi to the 40S ribosome. The eIF-3 complex specifically targets and initiates translation of a subset of mRNAs involved in cell proliferation. In Phaeosphaeria nodorum (strain SN15 / ATCC MYA-4574 / FGSC 10173) (Glume blotch fungus), this protein is Eukaryotic translation initiation factor 3 subunit F.